A 115-amino-acid chain; its full sequence is Photosystem II reaction center Psb28 protein (115 aa).

It belongs to the Psb28 family. Part of the photosystem II complex.

Its subcellular location is the plastid. The protein resides in the chloroplast thylakoid membrane. The sequence is that of Photosystem II reaction center Psb28 protein from Cyanidium caldarium (Red alga).